We begin with the raw amino-acid sequence, 486 residues long: Citrate synthase 3, mitochondrial (486 aa).

The N-terminal 23 residues, 1–23 (MVQRLLPGAHICRRSFNSSAIIK), are a transit peptide targeting the mitochondrion. Catalysis depends on residues H315, H361, and D419. Positions 484–486 (NKL) match the Microbody targeting signal motif.

Belongs to the citrate synthase family.

It localises to the mitochondrion. It carries out the reaction oxaloacetate + acetyl-CoA + H2O = citrate + CoA + H(+). It functions in the pathway carbohydrate metabolism; tricarboxylic acid cycle; isocitrate from oxaloacetate: step 1/2. Dual specificity mitochondrial citrate and methylcitrate synthase with similar catalytic efficiency with both acetyl-CoA and propionyl-CoA. The protein is Citrate synthase 3, mitochondrial of Saccharomyces cerevisiae (strain ATCC 204508 / S288c) (Baker's yeast).